Reading from the N-terminus, the 206-residue chain is Small ribosomal subunit protein uS4 (206 aa).

Residues 18–45 (NIWGRPKSPVNRREYGPGQHGQRRKGKM) form a disordered region. An S4 RNA-binding domain is found at 94-157 (RRLDAVVYRA…KQLASVLEAV (64 aa)).

It belongs to the universal ribosomal protein uS4 family. In terms of assembly, part of the 30S ribosomal subunit. Contacts protein S5. The interaction surface between S4 and S5 is involved in control of translational fidelity.

Its function is as follows. One of the primary rRNA binding proteins, it binds directly to 16S rRNA where it nucleates assembly of the body of the 30S subunit. Functionally, with S5 and S12 plays an important role in translational accuracy. This Ruegeria pomeroyi (strain ATCC 700808 / DSM 15171 / DSS-3) (Silicibacter pomeroyi) protein is Small ribosomal subunit protein uS4.